The sequence spans 209 residues: Thymidine kinase (209 aa).

ATP contacts are provided by residues 16 to 23 (GPMFAGKT) and 90 to 93 (DESQ). Glutamate 91 serves as the catalytic Proton acceptor.

It belongs to the thymidine kinase family. As to quaternary structure, homotetramer.

It is found in the cytoplasm. The catalysed reaction is thymidine + ATP = dTMP + ADP + H(+). In Aster yellows witches'-broom phytoplasma (strain AYWB), this protein is Thymidine kinase.